We begin with the raw amino-acid sequence, 283 residues long: Pantothenate synthetase (283 aa).

ATP is bound at residue 34–41 (MGALHEGH). The Proton donor role is filled by H41. (R)-pantoate is bound at residue Q65. Q65 contacts beta-alanine. 152–155 (GQKD) lines the ATP pocket. Residue Q158 coordinates (R)-pantoate. ATP-binding positions include V181 and 189 to 192 (MSSR).

This sequence belongs to the pantothenate synthetase family. In terms of assembly, homodimer.

Its subcellular location is the cytoplasm. It catalyses the reaction (R)-pantoate + beta-alanine + ATP = (R)-pantothenate + AMP + diphosphate + H(+). The protein operates within cofactor biosynthesis; (R)-pantothenate biosynthesis; (R)-pantothenate from (R)-pantoate and beta-alanine: step 1/1. Its function is as follows. Catalyzes the condensation of pantoate with beta-alanine in an ATP-dependent reaction via a pantoyl-adenylate intermediate. This chain is Pantothenate synthetase, found in Nitrobacter winogradskyi (strain ATCC 25391 / DSM 10237 / CIP 104748 / NCIMB 11846 / Nb-255).